The sequence spans 473 residues: Photosystem II CP43 reaction center protein (473 aa).

The propeptide occupies 1 to 14 (MKTLYSLRRFYHVE). An N-acetylthreonine modification is found at threonine 15. Threonine 15 is subject to Phosphothreonine. Transmembrane regions (helical) follow at residues 69–93 (LFEVAHFVPEKPMYEQGLILLPHLA), 134–155 (LLGPETLEESFPFFGYVWKDRN), 178–200 (KALYFGGVYDTWAPGGGDVRKIT), 255–275 (KPFAWARRALVWSGEAYLSYS), and 291–312 (WFNNTAYPSEFYGPTGPEASQA). A [CaMn4O5] cluster-binding site is contributed by glutamate 367. A helical membrane pass occupies residues 447 to 471 (RARAAAAGFEKGIDRDFEPVLSMTP).

It belongs to the PsbB/PsbC family. PsbC subfamily. PSII is composed of 1 copy each of membrane proteins PsbA, PsbB, PsbC, PsbD, PsbE, PsbF, PsbH, PsbI, PsbJ, PsbK, PsbL, PsbM, PsbT, PsbX, PsbY, PsbZ, Psb30/Ycf12, at least 3 peripheral proteins of the oxygen-evolving complex and a large number of cofactors. It forms dimeric complexes. The cofactor is Binds multiple chlorophylls and provides some of the ligands for the Ca-4Mn-5O cluster of the oxygen-evolving complex. It may also provide a ligand for a Cl- that is required for oxygen evolution. PSII binds additional chlorophylls, carotenoids and specific lipids..

It is found in the plastid. The protein resides in the chloroplast thylakoid membrane. One of the components of the core complex of photosystem II (PSII). It binds chlorophyll and helps catalyze the primary light-induced photochemical processes of PSII. PSII is a light-driven water:plastoquinone oxidoreductase, using light energy to abstract electrons from H(2)O, generating O(2) and a proton gradient subsequently used for ATP formation. This chain is Photosystem II CP43 reaction center protein, found in Atropa belladonna (Belladonna).